The primary structure comprises 131 residues: Small ribosomal subunit protein bS6 (131 aa).

The disordered stretch occupies residues 96 to 131 (VTEASPMAKAKDERDSRRGPAGDRSYDEANAEEIAE). Positions 104–122 (KAKDERDSRRGPAGDRSYD) are enriched in basic and acidic residues.

The protein belongs to the bacterial ribosomal protein bS6 family.

Its function is as follows. Binds together with bS18 to 16S ribosomal RNA. This Shewanella sp. (strain ANA-3) protein is Small ribosomal subunit protein bS6.